Consider the following 232-residue polypeptide: UPF0758 protein FN0909 (232 aa).

The region spanning 110–232 is the MPN domain; sequence KISNKDILLK…YFSFLEEGLI (123 aa). Residues His181, His183, and Asp194 each coordinate Zn(2+). A JAMM motif motif is present at residues 181–194; the sequence is HNHPSDNITPSKSD.

The protein belongs to the UPF0758 family.

This Fusobacterium nucleatum subsp. nucleatum (strain ATCC 25586 / DSM 15643 / BCRC 10681 / CIP 101130 / JCM 8532 / KCTC 2640 / LMG 13131 / VPI 4355) protein is UPF0758 protein FN0909.